The primary structure comprises 315 residues: COMPASS component SWD3 (315 aa).

6 WD repeats span residues 53-93 (SHAR…HTFI), 94-133 (GHTA…LMKT), 136-178 (AHSE…KTLT), 187-228 (NGVV…RTFQ), 238-278 (HHSC…LLQL), and 285-315 (HHSS…WRWV).

Component of the Set1C/COMPASS complex which consists of SET1(2), BRE2(2), SPP1(2), SDC1(1), SHG1(1), SWD1(1), SWD2(1), and SWD3(1).

The protein resides in the nucleus. It is found in the chromosome. It localises to the telomere. In terms of biological role, the COMPASS (Set1C) complex specifically mono-, di- and trimethylates histone H3 to form H3K4me1/2/3, which subsequently plays a role in telomere length maintenance and transcription elongation regulation. COMPASS recognizes ubiquitinated H2B on one face of the nucleosome which stimulates the methylation of H3 on the opposing face. SWD3/CPS30 establishes COMPASS trimethylation activity and may also serve as the anchor point to properly tether and space the other subunits. In Saccharomyces cerevisiae (strain ATCC 204508 / S288c) (Baker's yeast), this protein is COMPASS component SWD3.